The primary structure comprises 317 residues: L-lactate dehydrogenase (317 aa).

Residues V17, D38, K43, Y69, and 83-84 (GA) contribute to the NAD(+) site. Substrate-binding residues include Q86 and R92. Residues S105, 122 to 124 (ATN), and S147 each bind NAD(+). A substrate-binding site is contributed by 124–127 (NPVD). A substrate-binding site is contributed by 152-155 (DTAR). Residues R157 and H172 each coordinate beta-D-fructose 1,6-bisphosphate. H179 (proton acceptor) is an active-site residue. Residue Y224 is modified to Phosphotyrosine. A substrate-binding site is contributed by T233.

It belongs to the LDH/MDH superfamily. LDH family. Homotetramer.

It localises to the cytoplasm. It catalyses the reaction (S)-lactate + NAD(+) = pyruvate + NADH + H(+). It functions in the pathway fermentation; pyruvate fermentation to lactate; (S)-lactate from pyruvate: step 1/1. With respect to regulation, allosterically activated by fructose 1,6-bisphosphate (FBP). Functionally, catalyzes the conversion of lactate to pyruvate. In Geobacillus thermodenitrificans (strain NG80-2), this protein is L-lactate dehydrogenase.